The following is a 282-amino-acid chain: 3-methyl-2-oxobutanoate hydroxymethyltransferase (282 aa).

Mg(2+) is bound by residues aspartate 45 and aspartate 84. Residues 45–46 (DS), aspartate 84, and lysine 114 each bind 3-methyl-2-oxobutanoate. Mg(2+) is bound at residue glutamate 116. Glutamate 183 functions as the Proton acceptor in the catalytic mechanism.

Belongs to the PanB family. Homodecamer; pentamer of dimers. It depends on Mg(2+) as a cofactor.

It localises to the cytoplasm. The enzyme catalyses 3-methyl-2-oxobutanoate + (6R)-5,10-methylene-5,6,7,8-tetrahydrofolate + H2O = 2-dehydropantoate + (6S)-5,6,7,8-tetrahydrofolate. The protein operates within cofactor biosynthesis; (R)-pantothenate biosynthesis; (R)-pantoate from 3-methyl-2-oxobutanoate: step 1/2. In terms of biological role, catalyzes the reversible reaction in which hydroxymethyl group from 5,10-methylenetetrahydrofolate is transferred onto alpha-ketoisovalerate to form ketopantoate. In Syntrophobacter fumaroxidans (strain DSM 10017 / MPOB), this protein is 3-methyl-2-oxobutanoate hydroxymethyltransferase.